Here is a 380-residue protein sequence, read N- to C-terminus: Proline iminopeptidase (380 aa).

The 263-residue stretch at 98-360 folds into the AB hydrolase-1 domain; it reads PVVFLHGGPG…IVYDAGHSAN (263 aa). Ser172 acts as the Nucleophile in catalysis. Asp329 is a catalytic residue. The Proton donor role is filled by His357.

It belongs to the peptidase S33 family.

The protein localises to the cytoplasm. It carries out the reaction Release of N-terminal proline from a peptide.. In terms of biological role, specifically catalyzes the removal of N-terminal proline residues from peptides. This chain is Proline iminopeptidase (PIP), found in Arabidopsis thaliana (Mouse-ear cress).